The sequence spans 289 residues: Eukaryotic translation initiation factor 3 subunit G (289 aa).

A disordered region spans residues 1–33 (MSRPTKADWADDEEFDDPSALPPQQITTNKDGT). An RRM domain is found at 209-287 (ATLRVTNVSE…LILRVEFAKR (79 aa)).

Belongs to the eIF-3 subunit G family. Component of the eukaryotic translation initiation factor 3 (eIF-3) complex.

The protein localises to the cytoplasm. Functionally, RNA-binding component of the eukaryotic translation initiation factor 3 (eIF-3) complex, which is involved in protein synthesis of a specialized repertoire of mRNAs and, together with other initiation factors, stimulates binding of mRNA and methionyl-tRNAi to the 40S ribosome. The eIF-3 complex specifically targets and initiates translation of a subset of mRNAs involved in cell proliferation. This subunit can bind 18S rRNA. The polypeptide is Eukaryotic translation initiation factor 3 subunit G (tif35) (Emericella nidulans (strain FGSC A4 / ATCC 38163 / CBS 112.46 / NRRL 194 / M139) (Aspergillus nidulans)).